The primary structure comprises 114 residues: Nucleoid-associated protein PCC7424_2224 (114 aa).

The protein belongs to the YbaB/EbfC family. Homodimer.

Its subcellular location is the cytoplasm. The protein localises to the nucleoid. Functionally, binds to DNA and alters its conformation. May be involved in regulation of gene expression, nucleoid organization and DNA protection. The polypeptide is Nucleoid-associated protein PCC7424_2224 (Gloeothece citriformis (strain PCC 7424) (Cyanothece sp. (strain PCC 7424))).